The primary structure comprises 207 residues: Small ribosomal subunit protein uS4 (207 aa).

Positions 31–53 (KAKFDSKPGQHGRTSGTRTSDFG) are disordered. The segment covering 42 to 52 (GRTSGTRTSDF) has biased composition (polar residues). The 62-residue stretch at 97 to 158 (SRLDNVVYRM…KSKKQTRVTE (62 aa)) folds into the S4 RNA-binding domain.

It belongs to the universal ribosomal protein uS4 family. As to quaternary structure, part of the 30S ribosomal subunit. Contacts protein S5. The interaction surface between S4 and S5 is involved in control of translational fidelity.

One of the primary rRNA binding proteins, it binds directly to 16S rRNA where it nucleates assembly of the body of the 30S subunit. Its function is as follows. With S5 and S12 plays an important role in translational accuracy. This is Small ribosomal subunit protein uS4 from Polaromonas sp. (strain JS666 / ATCC BAA-500).